Here is a 64-residue protein sequence, read N- to C-terminus: Alternative prion protein (64 aa).

The disordered stretch occupies residues 1–22 (MEHWGEPIPGTGQSWRQPLSTS). Positions 11–22 (TGQSWRQPLSTS) are enriched in polar residues. A helical membrane pass occupies residues 40–58 (WRWLGSAPWWWLGTATWWW).

It is found in the mitochondrion outer membrane. The sequence is that of Alternative prion protein from Ovis aries (Sheep).